Here is a 336-residue protein sequence, read N- to C-terminus: Immune-associated nucleotide-binding protein 13 (336 aa).

Positions 15–221 (KPERTLVLLG…YMADLSHELR (207 aa)) constitute an AIG1-type G domain. The tract at residues 24–31 (GRTGNGKS) is G1. GTP is bound by residues 24–32 (GRTGNGKSA) and serine 45. The interval 51–55 (FITKE) is G2. The interval 73–76 (DTPG) is G3. Residues 143-146 (TNED) are G4. A G5 region spans residues 179-181 (DNS). Asparagine 180 serves as a coordination point for GTP. Residues 265–328 (KEKISNQLKE…EKETASLRTE (64 aa)) adopt a coiled-coil conformation.

Belongs to the TRAFAC class TrmE-Era-EngA-EngB-Septin-like GTPase superfamily. AIG1/Toc34/Toc159-like paraseptin GTPase family. IAN subfamily. Expressed in pollen grains.

This chain is Immune-associated nucleotide-binding protein 13, found in Arabidopsis thaliana (Mouse-ear cress).